A 513-amino-acid polypeptide reads, in one-letter code: Acyltransferase uat1 (513 aa).

Residue H158 is the Proton acceptor of the active site.

This sequence belongs to the plant acyltransferase family.

It participates in secondary metabolite biosynthesis. Acyltransferase; part of the gene cluster that mediates the biosynthesis of the glycolipid biosurfactant ustilagic acid (UA). UA is a secreted cellobiose glycolipid that is toxic for many microorganisms and confers biocontrol activity to U.maydis. UA consists of 15,16-dihydroxypalmitic or 2,15,16-trihydroxypalmitic acid, which is O-glycosidically linked to cellobiose at its terminal hydroxyl group. In addition, the cellobiose moiety is acetylated and acylated with a short-chain hydroxy fatty acid. UA biosynthesis starts with omega-hydroxylation of palmitic acid catalyzed by the cytochrome P450 monooxygenase cyp1. Terminal hydroxylation of palmitic acid precedes subterminal hydroxylation catalyzed by the cytochrome P450 monooxygenase cyp2. Sequential glucosylation of the hydroxy fatty acid is probably catalyzed by the glycosyltransferase ugt1. The cellobiose lipid is further decorated by acetylation of the proximal glucose residue and by acylation with a short-chain beta-hydroxy fatty acid at the distal glucose residue. The acyltransferase uat1 may be a good candidate for catalyzing either acetylation or acylation of the cellobiose lipid. The fatty acid synthase fas2 may be involved in synthesis of the carbon backbone of the short-chain beta-hydroxy fatty acid esterified to the cellobiose disaccharide. The secreted UA consists of a mixture of both alpha-hydroxylated and non-hydroxylated glycolipids; therefore, alpha-hydroxylation of the long-chain fatty, catalyzed by the fatty acid hydroxylase ahd1, occurs late in UA biosynthesis and may be the last step before secretion. This chain is Acyltransferase uat1, found in Mycosarcoma maydis (Corn smut fungus).